A 645-amino-acid polypeptide reads, in one-letter code: MYQNLAIMIIMLPLASSVINGLFLKVIDTKLAQIIATGFLSLSALFSLVIFCDAGLDGNIIHIKLLPWIEVGNFKVNWSIYIDQLTSIMFIAVTWVSSVVHIYSLGYMAEDKGIIRFLSFLSLFTFFMLMLVSADNFLQLFFGWEGVGVCSYLLIGFWYSKESANKAAIKAFITNRASDFAFILGIITIIVYCGSANYKDVFSSAELLSNTKIFLQFSILDVICLLLFIGCMGKSAQIGLHVWLPDAMEGPTPVSALIHAATMVTAGVFLVARCSYLFEYSPLVLQFITIIGGVTCLFAASIAIMQSDIKKIIAYSTCSQLGYMFMACGVSAYNSGIFHLVTHAFFKALLFLSAGSIIHAVHEQDIFKMGDLRNKMPVTYGNSLIGSLALIGIYPLAGFYSKDSILEAAYSSGSFMFIFGIAAAILTAIYSMKIIMLVFYGKTKLEKDVFEHAHEPAKIMNTPLILLVAGSFFSGMIGYYLLSMDKPNGYFHESLFNLHIYKLLISHPPLYIKLLPMAVGIMGIVIGICVYNSSTIMSFRPSSMSFPRKRESSKPFNLVYNILHNKYYFDEIYNFLIVKPINCLASLFYLGDQKIIDRFGPNGFSRVVNCFSVLTGKTQTGYVFNYALYIVSFIVVVISVFVWKG.

Helical transmembrane passes span 7 to 27, 31 to 51, 88 to 108, 114 to 134, 137 to 157, 177 to 197, 213 to 233, 252 to 272, 284 to 304, 312 to 332, 337 to 357, 380 to 400, 415 to 435, 464 to 484, 510 to 530, and 623 to 643; these read IMII…LKVI, LAQI…LVIF, IMFI…LGYM, IIRF…LVSA, FLQL…LIGF, ASDF…GSAN, IFLQ…GCMG, TPVS…FLVA, VLQF…SIAI, IIAY…GVSA, IFHL…AGSI, YGNS…AGFY, FMFI…MKII, LILL…LLSM, LYIK…GICV, and VFNY…VFVW.

The protein belongs to the complex I subunit 5 family.

It is found in the cell membrane. It catalyses the reaction a quinone + NADH + 5 H(+)(in) = a quinol + NAD(+) + 4 H(+)(out). Its function is as follows. NDH-1 shuttles electrons from NADH, via FMN and iron-sulfur (Fe-S) centers, to quinones in the respiratory chain. Couples the redox reaction to proton translocation (for every two electrons transferred, four hydrogen ions are translocated across the cytoplasmic membrane), and thus conserves the redox energy in a proton gradient. This chain is NADH-quinone oxidoreductase subunit L (nuoL), found in Rickettsia felis (strain ATCC VR-1525 / URRWXCal2) (Rickettsia azadi).